Consider the following 476-residue polypeptide: DnaJ protein P58IPK homolog A (476 aa).

The first 28 residues, 1–28, serve as a signal peptide directing secretion; it reads MVAMARWPWRVLLPLLLLHSSPVFFVFA. 8 TPR repeats span residues 36 to 69, 70 to 103, 116 to 150, 152 to 184, 185 to 218, 231 to 264, 269 to 302, and 304 to 336; these read PSTLFKRALEMMNLRKYDGSLGLLNAVLEVEPNH, SEAYRQRASVLRHKCRYKEAEGDYSKYLELKPGS, AQNALESAYGQFESHDFSKVLDYINKIVLVFSPDC, KAKLLKAKALLALKDYSTVISETGFILKEDEDN, LDALLLRGRAYYYLADHDVASRHYQKGLRLDPEH, LVKKTKSAEDNAAKGKLRVSAEDYKASLAMDPDH, VHLYLGLCKVLVKLGRGKEAISSCTEALNIDGEL, and DALTQRGEAKLLTEDWEGAVQDLKEAAQKSPQD. Residues 357–423 form the J domain; that stretch reads DWYKILGISK…DKRVRYDRGE (67 aa).

In terms of assembly, interacts with BIP1.

The protein localises to the endoplasmic reticulum lumen. In terms of biological role, may play a role in protein folding in the endoplasmic reticulum. The polypeptide is DnaJ protein P58IPK homolog A (Oryza sativa subsp. japonica (Rice)).